The sequence spans 547 residues: Chaperonin GroEL (547 aa).

ATP contacts are provided by residues 30-33 (TLGP), lysine 51, 87-91 (DGTTT), glycine 415, and aspartate 495. The interval 525 to 547 (PDEKEAGGGAPDMGGMGGMGGMM) is disordered. A compositionally biased stretch (gly residues) spans 531 to 547 (GGGAPDMGGMGGMGGMM).

Belongs to the chaperonin (HSP60) family. In terms of assembly, forms a cylinder of 14 subunits composed of two heptameric rings stacked back-to-back. Interacts with the co-chaperonin GroES.

Its subcellular location is the cytoplasm. It catalyses the reaction ATP + H2O + a folded polypeptide = ADP + phosphate + an unfolded polypeptide.. In terms of biological role, together with its co-chaperonin GroES, plays an essential role in assisting protein folding. The GroEL-GroES system forms a nano-cage that allows encapsulation of the non-native substrate proteins and provides a physical environment optimized to promote and accelerate protein folding. The sequence is that of Chaperonin GroEL from Chromohalobacter salexigens (strain ATCC BAA-138 / DSM 3043 / CIP 106854 / NCIMB 13768 / 1H11).